A 460-amino-acid polypeptide reads, in one-letter code: Elongation factor 1-alpha (460 aa).

Gly2 carries the n,N,N-trimethylglycine modification. At Lys3 the chain carries N6,N6-dimethyllysine; alternate. At Lys3 the chain carries N6-methyllysine; alternate. The region spanning 6 to 241 (KQHINIVVIG…DAIEPPVRPT (236 aa)) is the tr-type G domain. Positions 15 to 22 (GHVDSGKS) are G1. 15–22 (GHVDSGKS) is a GTP binding site. An N6-methyllysine modification is found at Lys31. The G2 stretch occupies residues 71 to 75 (GITID). An N6,N6,N6-trimethyllysine modification is found at Lys80. The G3 stretch occupies residues 92–95 (DAPG). Residues 92–96 (DAPGH) and 154–157 (NKMD) contribute to the GTP site. The G4 stretch occupies residues 154–157 (NKMD). The G5 stretch occupies residues 193-195 (SGF). Lys317 is modified (N6,N6-dimethyllysine; alternate). Residue Lys317 is modified to N6-methyllysine; alternate. Lys391 is modified (N6-methyllysine).

It belongs to the TRAFAC class translation factor GTPase superfamily. Classic translation factor GTPase family. EF-Tu/EF-1A subfamily.

The protein localises to the cytoplasm. Its function is as follows. This protein promotes the GTP-dependent binding of aminoacyl-tRNA to the A-site of ribosomes during protein biosynthesis. The chain is Elongation factor 1-alpha (tef1) from Aspergillus oryzae (strain ATCC 42149 / RIB 40) (Yellow koji mold).